Consider the following 190-residue polypeptide: Apolipoprotein M (190 aa).

The N-terminal stretch at 1–17 (MFHQVWAALLYLYGLLF) is a signal peptide. Cystine bridges form between C23/C169, C95/C185, and C130/C159. 2 residues coordinate tetradecanoate: E138 and R145.

This sequence belongs to the calycin superfamily. Lipocalin family. Highly divergent. As to quaternary structure, interacts with LRP2; LRP2 mediates APOM renal uptake and subsequent lysosomal degradation. Expressed by the liver; secreted in plasma.

It is found in the secreted. Functionally, probably involved in lipid transport. Can bind sphingosine-1-phosphate, myristic acid, palmitic acid and stearic acid, retinol, all-trans-retinoic acid and 9-cis-retinoic acid. In Rattus norvegicus (Rat), this protein is Apolipoprotein M (Apom).